Here is a 199-residue protein sequence, read N- to C-terminus: Phosphatidylethanolamine N-methyltransferase (199 aa).

Topologically, residues Met-1–Glu-12 are lumenal. Residues Pro-13–Ala-33 constitute an intramembrane region (helical). Over Arg-34–Ala-45 the chain is Lumenal. The chain crosses the membrane as a helical span at residues Phe-46–Leu-66. Residues Arg-67–Gly-93 lie on the Cytoplasmic side of the membrane. A helical transmembrane segment spans residues Leu-94–Thr-114. Residue Gly-98 to Gly-100 coordinates S-adenosyl-L-methionine. Residues Gly-115–His-157 lie on the Lumenal side of the membrane. Residues Ala-158–Leu-178 traverse the membrane as a helical segment. The Cytoplasmic portion of the chain corresponds to Tyr-179 to Ser-199. Glu-180–Glu-181 contributes to the S-adenosyl-L-methionine binding site.

The protein belongs to the class VI-like SAM-binding methyltransferase superfamily. PEMT/PEM2 methyltransferase family. In terms of tissue distribution, expressed in liver (at protein level).

The protein localises to the endoplasmic reticulum membrane. It localises to the mitochondrion membrane. The enzyme catalyses a 1,2-diacyl-sn-glycero-3-phospho-N-methylethanolamine + S-adenosyl-L-methionine = a 1,2-diacyl-sn-glycero-3-phospho-N,N-dimethylethanolamine + S-adenosyl-L-homocysteine + H(+). The catalysed reaction is a 1,2-diacyl-sn-glycero-3-phospho-N,N-dimethylethanolamine + S-adenosyl-L-methionine = a 1,2-diacyl-sn-glycero-3-phosphocholine + S-adenosyl-L-homocysteine + H(+). It catalyses the reaction a 1,2-diacyl-sn-glycero-3-phosphoethanolamine + S-adenosyl-L-methionine = a 1,2-diacyl-sn-glycero-3-phospho-N-methylethanolamine + S-adenosyl-L-homocysteine + H(+). It carries out the reaction 1,2-di-(9Z-octadecenoyl)-sn-glycero-3-phosphoethanolamine + S-adenosyl-L-methionine = 1,2-di-(9Z-octadecenoyl)-sn-glycero-3-phospho-N-methylethanolamine + S-adenosyl-L-homocysteine + H(+). The enzyme catalyses 1,2-di-(9Z-octadecenoyl)-sn-glycero-3-phospho-N-methylethanolamine + S-adenosyl-L-methionine = 1,2-di-(9Z-octadecenoyl)-sn-glycero-3-phospho-N,N-dimethylethanolamine + S-adenosyl-L-homocysteine + H(+). The catalysed reaction is 1,2-di-(9Z-octadecenoyl)-sn-glycero-3-phospho-N,N-dimethylethanolamine + S-adenosyl-L-methionine = 1,2-di-(9Z-octadecenoyl)-sn-glycero-3-phosphocholine + S-adenosyl-L-homocysteine + H(+). It catalyses the reaction 1,2-di-(9Z,12Z-octadecadienoyl)-sn-glycero-3-phosphoethanolamine + S-adenosyl-L-methionine = 1,2-di-(9Z,12Z-octadecadienoyl)-sn-glycero-3-phospho-N-methylethanolamine + S-adenosyl-L-homocysteine + H(+). It carries out the reaction 1,2-di-(9Z,12Z-octadecadienoyl)-sn-glycero-3-phospho-N-methylethanolamine + S-adenosyl-L-methionine = 1,2-di-(9Z,12Z-octadecadienoyl)-sn-glycero-3-phospho-N,N-dimethylethanolamine + S-adenosyl-L-homocysteine + H(+). The enzyme catalyses 1,2-di-(9Z,12Z-octadecadienoyl)-sn-glycero-3-phospho-N,N-dimethylethanolamine + S-adenosyl-L-methionine = 1,2-di-(9Z,12Z-octadecadienoyl)-sn-glycero-3-phosphocholine + S-adenosyl-L-homocysteine + H(+). The catalysed reaction is 1,2-di-(9Z,12Z,15Z-octadecatrienoyl)-sn-glycero-3-phosphoethanolamine + S-adenosyl-L-methionine = 1,2-di-(9Z,12Z,15Z-octadecatrienoyl)-sn-glycero-3-phospho-N-methylethanolamine + S-adenosyl-L-homocysteine + H(+). It catalyses the reaction 1,2-di-(9Z,12Z,15Z-octadecatrienoyl)-sn-glycero-3-phospho-N-methylethanolamine + S-adenosyl-L-methionine = 1,2-di-(9Z,12Z,15Z-octadecatrienoyl)-sn-glycero-3-phospho-N,N-dimethylethanolamine + S-adenosyl-L-homocysteine + H(+). It carries out the reaction 1,2-di-(9Z,12Z,15Z-octadecatrienoyl)-sn-glycero-3-phospho-N,N-dimethylethanolamine + S-adenosyl-L-methionine = 1,2-di-(9Z,12Z,15Z-octadecatrienoyl)-sn-glycero-3-phosphocholine + S-adenosyl-L-homocysteine + H(+). The enzyme catalyses 1-hexadecanoyl-2-(4Z,7Z,10Z,13Z,16Z,19Z-docosahexaenoyl)-sn-glycero-3-phosphoethanolamine + S-adenosyl-L-methionine = 1-hexadecanoyl-2-(4Z,7Z,10Z,13Z,16Z,19Z-docosahexaenoyl)-sn-glycero-3-phospho-N-methylethanolamine + S-adenosyl-L-homocysteine + H(+). The catalysed reaction is 1-hexadecanoyl-2-(4Z,7Z,10Z,13Z,16Z,19Z-docosahexaenoyl)-sn-glycero-3-phospho-N-methylethanolamine + S-adenosyl-L-methionine = 1-hexadecanoyl-2-(4Z,7Z,10Z,13Z,16Z,19Z-docosahexaenoyl)-sn-glycero-3-phospho-N,N-dimethylethanolamine + S-adenosyl-L-homocysteine + H(+). It catalyses the reaction 1-hexadecanoyl-2-(4Z,7Z,10Z,13Z,16Z,19Z-docosahexaenoyl)-sn-glycero-3-phospho-N,N-dimethylethanolamine + S-adenosyl-L-methionine = 1-hexadecanoyl-2-(4Z,7Z,10Z,13Z,16Z,19Z-docosahexaenoyl)-sn-glycero-3-phosphocholine + S-adenosyl-L-homocysteine + H(+). It functions in the pathway phospholipid metabolism; phosphatidylcholine biosynthesis. Catalyzes the three sequential steps of the methylation pathway for the biosynthesis of phosphatidylcholine, a critical and essential component for membrane structure. Uses S-adenosylmethionine (S-adenosyl-L-methionine, SAM or AdoMet) as the methyl group donor for the methylation of phosphatidylethanolamine (1,2-diacyl-sn-glycero-3-phosphoethanolamine, PE) to phosphatidylmonomethylethanolamine (1,2-diacyl-sn-glycero-3-phospho-N-methylethanolamine, PMME), PMME to phosphatidyldimethylethanolamine (1,2-diacyl-sn-glycero-3-phospho-N,N-dimethylethanolamine, PDME), and PDME to phosphatidylcholine (1,2-diacyl-sn-glycero-3-phosphocholine, PC), producing S-adenosyl-L-homocysteine in each step. The chain is Phosphatidylethanolamine N-methyltransferase from Mus musculus (Mouse).